The following is a 401-amino-acid chain: Tryptophan synthase beta chain (401 aa).

The residue at position 92 (Lys-92) is an N6-(pyridoxal phosphate)lysine.

This sequence belongs to the TrpB family. Tetramer of two alpha and two beta chains. The cofactor is pyridoxal 5'-phosphate.

The catalysed reaction is (1S,2R)-1-C-(indol-3-yl)glycerol 3-phosphate + L-serine = D-glyceraldehyde 3-phosphate + L-tryptophan + H2O. It functions in the pathway amino-acid biosynthesis; L-tryptophan biosynthesis; L-tryptophan from chorismate: step 5/5. In terms of biological role, the beta subunit is responsible for the synthesis of L-tryptophan from indole and L-serine. The protein is Tryptophan synthase beta chain of Vesicomyosocius okutanii subsp. Calyptogena okutanii (strain HA).